The sequence spans 377 residues: Erythronate-4-phosphate dehydrogenase (377 aa).

Serine 45 and threonine 67 together coordinate substrate. NAD(+)-binding positions include 127-128 (QV), aspartate 147, and threonine 176. The active site involves arginine 209. Aspartate 233 serves as a coordination point for NAD(+). Glutamate 238 is an active-site residue. Histidine 255 serves as the catalytic Proton donor. Glycine 258 is a binding site for NAD(+). Substrate is bound at residue tyrosine 259.

It belongs to the D-isomer specific 2-hydroxyacid dehydrogenase family. PdxB subfamily. Homodimer.

Its subcellular location is the cytoplasm. The enzyme catalyses 4-phospho-D-erythronate + NAD(+) = (R)-3-hydroxy-2-oxo-4-phosphooxybutanoate + NADH + H(+). It functions in the pathway cofactor biosynthesis; pyridoxine 5'-phosphate biosynthesis; pyridoxine 5'-phosphate from D-erythrose 4-phosphate: step 2/5. In terms of biological role, catalyzes the oxidation of erythronate-4-phosphate to 3-hydroxy-2-oxo-4-phosphonooxybutanoate. This Vibrio atlanticus (strain LGP32) (Vibrio splendidus (strain Mel32)) protein is Erythronate-4-phosphate dehydrogenase.